The sequence spans 153 residues: Small ribosomal subunit protein uS5 (153 aa).

Residues 15–78 (FQEVVVNIGR…DDAFKNLIHV (64 aa)) form the S5 DRBM domain.

The protein belongs to the universal ribosomal protein uS5 family. Part of the 30S ribosomal subunit. Contacts proteins S4 and S8.

In terms of biological role, with S4 and S12 plays an important role in translational accuracy. Functionally, located at the back of the 30S subunit body where it stabilizes the conformation of the head with respect to the body. The sequence is that of Small ribosomal subunit protein uS5 from Helicobacter pylori (strain P12).